Reading from the N-terminus, the 189-residue chain is Protein GrpE (189 aa).

The disordered stretch occupies residues Met1–Glu22. Positions Gln10–Glu22 are enriched in acidic residues.

It belongs to the GrpE family. In terms of assembly, homodimer.

Its subcellular location is the cytoplasm. Functionally, participates actively in the response to hyperosmotic and heat shock by preventing the aggregation of stress-denatured proteins, in association with DnaK and GrpE. It is the nucleotide exchange factor for DnaK and may function as a thermosensor. Unfolded proteins bind initially to DnaJ; upon interaction with the DnaJ-bound protein, DnaK hydrolyzes its bound ATP, resulting in the formation of a stable complex. GrpE releases ADP from DnaK; ATP binding to DnaK triggers the release of the substrate protein, thus completing the reaction cycle. Several rounds of ATP-dependent interactions between DnaJ, DnaK and GrpE are required for fully efficient folding. The protein is Protein GrpE of Leuconostoc citreum (strain KM20).